The chain runs to 501 residues: MESRLGWLTDLSTETGTNLRRTSIICTIGPKTNNPETLVELRKAGMNIVRMNFSHGSYEYHQSVIDNARKSEELYQGRPLAIALDTKGPEIRTGTTTNDVDYPIPPNHEMIFTTDDKYAKACDDKTMYVDYKNITKVIEAGRIIYVDDGVLSFEVLEVIDDNTLKVKSLNAGKICSHKGVNLPGTDVDLPALSEKDKSDLKFGVKNGVHMVFASFIRTAQDVLTIREVLGEQGKDIKIIVKIENQQGVNNFDDILKVTDGVMVARGDLGIEIPAPQVFAVQKKLIAKCNLAGKPVICATQMLESMTYNPRPTRAEVSDVGNAVLDGADCVMLSGETAKGNYPINAVKTMAETALIAEQAIPYIPTYDDLRNLTPKPTSTTETIAAASVSAVFEQKARALIVLSTTGDTPRLVAKYKPNVPIVMVTRNPRAARFSHLYRGVFPFVYDESSDSEWTVDVEKRINFGVKKAKEFGILVDGDTIVTIQGFAAGVGNSNTLRVLTV.

Arginine 50 is a substrate binding site. K(+) is bound by residues asparagine 52, serine 54, aspartate 85, and threonine 86. An ATP-binding site is contributed by asparagine 52 to histidine 55. Positions 92 and 178 each coordinate ATP. Position 243 (glutamate 243) interacts with Mg(2+). Residues glycine 266, aspartate 267, and threonine 299 each coordinate substrate. Aspartate 267 contacts Mg(2+).

It belongs to the pyruvate kinase family. Homotetramer. Mg(2+) serves as cofactor. It depends on K(+) as a cofactor.

It carries out the reaction pyruvate + ATP = phosphoenolpyruvate + ADP + H(+). Its pathway is carbohydrate degradation; glycolysis; pyruvate from D-glyceraldehyde 3-phosphate: step 5/5. In Kluyveromyces lactis (strain ATCC 8585 / CBS 2359 / DSM 70799 / NBRC 1267 / NRRL Y-1140 / WM37) (Yeast), this protein is Pyruvate kinase (PYK1).